A 125-amino-acid polypeptide reads, in one-letter code: MFRSVCRISSRVAPSAYRTIMGRSVMSNTILAQRFYSANLSKDQVSQRVIDVIKAFDKNSPNIANKQISSDTQFHKDLGLDSLDTVELLVAIEEEFDIEIPDKVADELRSVGETVDYIASNPDAN.

The transit peptide at 1 to 36 directs the protein to the mitochondrion; it reads MFRSVCRISSRVAPSAYRTIMGRSVMSNTILAQRFY. Positions 43-122 constitute a Carrier domain; that stretch reads DQVSQRVIDV…ETVDYIASNP (80 aa). At S82 the chain carries O-(pantetheine 4'-phosphoryl)serine.

This sequence belongs to the acyl carrier protein (ACP) family. As to quaternary structure, complex I is composed of about 30 different subunits. 4'-phosphopantetheine is transferred from CoA to a specific serine of apo-ACP by acpS. This modification is essential for activity because fatty acids are bound in thioester linkage to the sulfhydryl of the prosthetic group.

The protein resides in the mitochondrion. The protein operates within lipid metabolism; fatty acid biosynthesis. Carrier of the growing fatty acid chain in fatty acid biosynthesis. May be involved in the synthesis of very-long-chain fatty acids. Accessory and non-catalytic subunit of the mitochondrial membrane respiratory chain NADH dehydrogenase (Complex I), which functions in the transfer of electrons from NADH to the respiratory chain. In Saccharomyces cerevisiae (strain ATCC 204508 / S288c) (Baker's yeast), this protein is Acyl carrier protein, mitochondrial (ACP1).